A 190-amino-acid chain; its full sequence is Capsid protein (190 aa).

The residue at position 1 (Met1) is an N-acetylmethionine; by host.

The protein belongs to the tymoviruses capsid protein family.

It localises to the virion. In terms of biological role, self-assembles to form a T=3 icosahedral capsid composed of 180 copies of the capsid protein. The capsid encapsulates the single-stranded RNA genome. The chain is Capsid protein from Atropa belladonna (Belladonna).